An 87-amino-acid polypeptide reads, in one-letter code: UPF0512 protein B (87 aa).

This sequence belongs to the UPF0512 family.

In Dictyostelium discoideum (Social amoeba), this protein is UPF0512 protein B.